The following is an 88-amino-acid chain: Large ribosomal subunit protein bL27 (88 aa).

The segment at 1–25 (MAHKKGASSSSNGRDSEAKRLGVKR) is disordered.

The protein belongs to the bacterial ribosomal protein bL27 family.

This Corynebacterium diphtheriae (strain ATCC 700971 / NCTC 13129 / Biotype gravis) protein is Large ribosomal subunit protein bL27.